The primary structure comprises 213 residues: GrpE protein homolog, mitochondrial (213 aa).

The segment at 35 to 55 is disordered; that stretch reads STEKQPEEATEQKATESSPEV. The span at 38–55 shows a compositional bias: basic and acidic residues; sequence KQPEEATEQKATESSPEV.

It belongs to the GrpE family. As to quaternary structure, probable component of the PAM complex at least composed of a mitochondrial HSP70 protein, Roe1, TIM44, blp/TIM16 and TIM14.

It localises to the mitochondrion matrix. Functionally, essential component of the PAM complex, a complex required for the translocation of transit peptide-containing proteins from the inner membrane into the mitochondrial matrix in an ATP-dependent manner. Seems to control the nucleotide-dependent binding of mitochondrial HSP70 to substrate proteins. This is GrpE protein homolog, mitochondrial (Roe1) from Drosophila melanogaster (Fruit fly).